Here is a 155-residue protein sequence, read N- to C-terminus: Pathogenesis-related protein B (155 aa).

Belongs to the BetVI family.

The chain is Pathogenesis-related protein B (PCPR1-3) from Petroselinum crispum (Parsley).